The following is a 685-amino-acid chain: Probable serine/threonine-protein kinase CPE1738 (685 aa).

Positions 10-275 (YELLQCVGEG…LEKIKKDPNV (266 aa)) constitute a Protein kinase domain. ATP contacts are provided by residues 16–24 (VGEGGMSFV) and Lys39. Glu143 serves as the catalytic Proton acceptor. Positions 277–339 (ISSKSAEDED…NIQTKPQKAI (63 aa)) are disordered. Residues 306 to 329 (EPDEDDEDDDEYYEDDEDEDEEEN) are compositionally biased toward acidic residues. PASTA domains are found at residues 376–440 (GKDV…TVSG), 441–508 (GEGQ…TISK), 513–581 (KSET…TINY), and 589–648 (EKPK…TMEE). A disordered region spans residues 480-500 (VPRGEVISQSPNANESVDKGS). The interval 623 to 685 (DTAKVKSVSN…PKQPEQSGNN (63 aa)) is disordered. 2 stretches are compositionally biased toward low complexity: residues 627–645 (VKSV…VSVT) and 654–685 (QPTQ…SGNN).

This sequence belongs to the protein kinase superfamily. Ser/Thr protein kinase family.

It carries out the reaction L-seryl-[protein] + ATP = O-phospho-L-seryl-[protein] + ADP + H(+). The enzyme catalyses L-threonyl-[protein] + ATP = O-phospho-L-threonyl-[protein] + ADP + H(+). This is Probable serine/threonine-protein kinase CPE1738 from Clostridium perfringens (strain 13 / Type A).